We begin with the raw amino-acid sequence, 757 residues long: Exo-alpha-(1-&gt;6)-L-arabinopyranosidase (757 aa).

The active site involves D232.

The protein belongs to the glycosyl hydrolase 3 family. Homotetramer.

With respect to regulation, completely inhibited by Cu(2+) and activated by Co(2+). In terms of biological role, catalyzes the hydrolysis of a non-reducing terminal alpha-L-arabinopyranosidic linkage in ginsenoside Rb2 (alpha-L-arabinopyranosyl-(1-&gt;6)-alpha-D-glucopyranosyl) to release alpha-D-glucopyranosyl (Rd). It is not able to hydrolyze alpha-L-arabinofuranosyl-(1-&gt;6)-alpha-D-glucopyranosyl (Rc). The chain is Exo-alpha-(1-&gt;6)-L-arabinopyranosidase (apy) from Bifidobacterium longum.